The following is a 677-amino-acid chain: Pannexin-2 (677 aa).

Topologically, residues 11-47 are cytoplasmic; that stretch reads MATALLAGEKLRELILPGAQDDKAGALAALLLQLKLE. A helical transmembrane segment spans residues 48 to 70; sequence LPFDRVVTIGTVLVPILLVTLVF. The Extracellular segment spans residues 71–123; that stretch reads TKNFAEEPIYCYTPHNFTRDQALYARGYCWTELRDALPGVDASLWPSLFEHKF. Asn-86 carries N-linked (GlcNAc...) asparagine glycosylation. Residues 124-146 form a helical membrane-spanning segment; sequence LPYALLAFAAIMYVPALGWEFLA. The Cytoplasmic segment spans residues 147–226; the sequence is STRLTSELNF…RGRSNFLAKL (80 aa). Residues 227 to 249 form a helical membrane-spanning segment; it reads YLARHVLILLLSAVPISYLCTYY. Residues 250–292 are Extracellular-facing; it reads ATQKQNEFTCALGASPDGAAGAGPAVRVSCKLPSVQLQRIIAG. A helical transmembrane segment spans residues 293–315; that stretch reads VDIVLLCVMNLIILVNLIHLFIF. Over 316-643 the chain is Cytoplasmic; sequence RKSNFIFDKL…AREEEDGGPR (328 aa). Disordered stretches follow at residues 393–423 and 454–510; these read ATPT…PPVV and NSKA…KKHA. Residues 492 to 504 show a composition bias toward pro residues; sequence GPGPAPAPAPPPA. Ser-593 carries the phosphoserine modification.

Belongs to the pannexin family. As to quaternary structure, homoheptameric. S-palmitoylated in neural stem and progenitor cells. Post-translationally, cleaved by CASP3 and CASP7 during apoptosis. Cleavage has no effect on it function.

It is found in the cell membrane. Its subcellular location is the golgi apparatus membrane. The protein localises to the endoplasmic reticulum membrane. It carries out the reaction ATP(in) = ATP(out). It catalyses the reaction chloride(in) = chloride(out). The enzyme catalyses iodide(out) = iodide(in). The catalysed reaction is Na(+)(in) = Na(+)(out). It carries out the reaction D-gluconate(in) = D-gluconate(out). Functionally, ion channel with a slight anion preference. Also able to release ATP. Plays a role in regulating neurogenesis and apoptosis in keratinocytes. The sequence is that of Pannexin-2 from Homo sapiens (Human).